The primary structure comprises 167 residues: Small ribosomal subunit protein uS3m (167 aa).

The N-terminal 35 residues, 1–35 (MAASVCSGLLGPRVLSWSRELPCAWRALHTSPVCA), are a transit peptide targeting the mitochondrion.

It belongs to the universal ribosomal protein uS3 family. As to quaternary structure, component of the mitochondrial small ribosomal subunit (mt-SSU). Mature mammalian 55S mitochondrial ribosomes consist of a small (28S) and a large (39S) subunit. The 28S small subunit contains a 12S ribosomal RNA (12S mt-rRNA) and 30 different proteins. The 39S large subunit contains a 16S rRNA (16S mt-rRNA), a copy of mitochondrial valine transfer RNA (mt-tRNA(Val)), which plays an integral structural role, and 52 different proteins.

The protein resides in the mitochondrion. This Homo sapiens (Human) protein is Small ribosomal subunit protein uS3m (MRPS24).